The chain runs to 242 residues: MSRDEIYRQSQSFLDDFGFGESVATVFDDMLERSVPFYAELQRMIAEMAGDFAMPHTRIYDFGCSTGTTLIGLDQAIGPRGLTLVGVDNSQEMLAKCRAKMAGHAFANAVELIRADLNQGVVMENASLALMILTLQFVRPLYRDRLVRAIHDGLEENGALVLVEKVLGESSLFNRSFIKYYYEFKKRNGYTELEIAQKREALENVLVPYKLAENLEMLESAGFRYVDVFFKWYNFVGIVAVK.

Residues Tyr38, 63–65 (GCS), 88–89 (DN), 116–117 (DL), and Arg199 contribute to the S-adenosyl-L-methionine site.

It belongs to the class I-like SAM-binding methyltransferase superfamily. Cx-SAM synthase family. Homodimer.

It catalyses the reaction prephenate + S-adenosyl-L-methionine = carboxy-S-adenosyl-L-methionine + 3-phenylpyruvate + H2O. Catalyzes the conversion of S-adenosyl-L-methionine (SAM) to carboxy-S-adenosyl-L-methionine (Cx-SAM). The chain is Carboxy-S-adenosyl-L-methionine synthase from Methylococcus capsulatus (strain ATCC 33009 / NCIMB 11132 / Bath).